Consider the following 248-residue polypeptide: Probable transcriptional regulatory protein Psyr_1407 (248 aa).

The protein belongs to the TACO1 family.

It is found in the cytoplasm. The polypeptide is Probable transcriptional regulatory protein Psyr_1407 (Pseudomonas syringae pv. syringae (strain B728a)).